Here is a 221-residue protein sequence, read N- to C-terminus: Protein GrpE 1 (221 aa).

Disordered regions lie at residues 1–44 and 192–221; these read MTEE…AAAQ and VAEP…PEEG. The segment covering 26–44 has biased composition (low complexity); it reads KAAPSEGAAPAGDAAAAAQ. A compositionally biased stretch (basic and acidic residues) spans 203-221; that stretch reads KADEAEAADDKESGGPEEG.

It belongs to the GrpE family. In terms of assembly, homodimer.

Its subcellular location is the cytoplasm. Participates actively in the response to hyperosmotic and heat shock by preventing the aggregation of stress-denatured proteins, in association with DnaK and GrpE. It is the nucleotide exchange factor for DnaK and may function as a thermosensor. Unfolded proteins bind initially to DnaJ; upon interaction with the DnaJ-bound protein, DnaK hydrolyzes its bound ATP, resulting in the formation of a stable complex. GrpE releases ADP from DnaK; ATP binding to DnaK triggers the release of the substrate protein, thus completing the reaction cycle. Several rounds of ATP-dependent interactions between DnaJ, DnaK and GrpE are required for fully efficient folding. This chain is Protein GrpE 1, found in Streptomyces avermitilis (strain ATCC 31267 / DSM 46492 / JCM 5070 / NBRC 14893 / NCIMB 12804 / NRRL 8165 / MA-4680).